Consider the following 183-residue polypeptide: Oligoribonuclease (183 aa).

An Exonuclease domain is found at 10–173 (LIWIDLEMTG…ADIRESIAEL (164 aa)). Tyr-131 is an active-site residue.

Belongs to the oligoribonuclease family.

The protein resides in the cytoplasm. Its function is as follows. 3'-to-5' exoribonuclease specific for small oligoribonucleotides. The polypeptide is Oligoribonuclease (Idiomarina loihiensis (strain ATCC BAA-735 / DSM 15497 / L2-TR)).